A 240-amino-acid polypeptide reads, in one-letter code: Serine protease SplB (240 aa).

The first 36 residues, 1–36 (MNKNVVIKSLAALTILTSVTGIGTTLVEEVQQTAKA), serve as a signal peptide directing secretion. Catalysis depends on charge relay system residues H75, D113, and S193.

This sequence belongs to the peptidase S1B family.

It localises to the secreted. In terms of biological role, serine protease that cleaves specifically after the sequence Trp-Glu-Leu-Gln. This is Serine protease SplB (splB) from Staphylococcus aureus (strain USA300).